The sequence spans 251 residues: Ubiquinone/menaquinone biosynthesis C-methyltransferase UbiE (251 aa).

Residues T74, D95, 123-124, and S140 each bind S-adenosyl-L-methionine; that span reads NA.

The protein belongs to the class I-like SAM-binding methyltransferase superfamily. MenG/UbiE family.

It catalyses the reaction a 2-demethylmenaquinol + S-adenosyl-L-methionine = a menaquinol + S-adenosyl-L-homocysteine + H(+). It carries out the reaction a 2-methoxy-6-(all-trans-polyprenyl)benzene-1,4-diol + S-adenosyl-L-methionine = a 5-methoxy-2-methyl-3-(all-trans-polyprenyl)benzene-1,4-diol + S-adenosyl-L-homocysteine + H(+). Its pathway is quinol/quinone metabolism; menaquinone biosynthesis; menaquinol from 1,4-dihydroxy-2-naphthoate: step 2/2. The protein operates within cofactor biosynthesis; ubiquinone biosynthesis. Its function is as follows. Methyltransferase required for the conversion of demethylmenaquinol (DMKH2) to menaquinol (MKH2) and the conversion of 2-polyprenyl-6-methoxy-1,4-benzoquinol (DDMQH2) to 2-polyprenyl-3-methyl-6-methoxy-1,4-benzoquinol (DMQH2). In Enterobacter sp. (strain 638), this protein is Ubiquinone/menaquinone biosynthesis C-methyltransferase UbiE.